The following is a 156-amino-acid chain: Lipoprotein signal peptidase (156 aa).

2 helical membrane passes run 52–72 and 85–105; these read ILEGQMWLFYIITSIVVIGIV and FATALALILGGAIGNFIDRIF. Residues Asp111 and Asp129 contribute to the active site. Residues 121–141 traverse the membrane as a helical segment; the sequence is NFPIFNVADSALCVGVGILFL.

It belongs to the peptidase A8 family.

The protein resides in the cell membrane. The enzyme catalyses Release of signal peptides from bacterial membrane prolipoproteins. Hydrolyzes -Xaa-Yaa-Zaa-|-(S,diacylglyceryl)Cys-, in which Xaa is hydrophobic (preferably Leu), and Yaa (Ala or Ser) and Zaa (Gly or Ala) have small, neutral side chains.. The protein operates within protein modification; lipoprotein biosynthesis (signal peptide cleavage). Functionally, this protein specifically catalyzes the removal of signal peptides from prolipoproteins. This is Lipoprotein signal peptidase from Halalkalibacterium halodurans (strain ATCC BAA-125 / DSM 18197 / FERM 7344 / JCM 9153 / C-125) (Bacillus halodurans).